Consider the following 110-residue polypeptide: uncharacterized protein (110 aa).

Residues 88-108 (LTRICLLIFGIGLVVLIFLKL) form a helical membrane-spanning segment.

It localises to the membrane. This is an uncharacterized protein from Rickettsia prowazekii (strain Madrid E).